Consider the following 173-residue polypeptide: MATRAWVAAAVALNPQLLPLRSCSPTKSVSPAQRSASMGLRLRSGRPCLGKFVCRRAKNAGYEDYKFPDPIPEFAEQETSKFREHMAWRLEQKKEDYFGDHVEEIVDVCTEIMGTFLENDYRGPGTLLVHPFLDMKGEIKERGLPGAPQAARAAIAWAEKNVDKDWKAWTGEY.

Residues 1 to 55 (MATRAWVAAAVALNPQLLPLRSCSPTKSVSPAQRSASMGLRLRSGRPCLGKFVCR) constitute a chloroplast transit peptide.

Its subcellular location is the plastid. It is found in the chloroplast stroma. It localises to the chloroplast nucleoid. Functionally, required for the activity of the plastid-encoded RNA polymerase (PEP) and full expression of genes transcribed by PEP. This chain is Protein PLASTID REDOX INSENSITIVE 2, chloroplastic, found in Zea mays (Maize).